Here is a 352-residue protein sequence, read N- to C-terminus: tRNA-specific 2-thiouridylase MnmA (352 aa).

ATP contacts are provided by residues 6–13 (AMSGGVDS) and Leu-32. Cys-101 serves as the catalytic Nucleophile. A disulfide bridge links Cys-101 with Cys-194. Gly-125 serves as a coordination point for ATP. Residues 144 to 146 (KDQ) form an interaction with tRNA region. The active-site Cysteine persulfide intermediate is Cys-194.

The protein belongs to the MnmA/TRMU family.

The protein localises to the cytoplasm. The enzyme catalyses S-sulfanyl-L-cysteinyl-[protein] + uridine(34) in tRNA + AH2 + ATP = 2-thiouridine(34) in tRNA + L-cysteinyl-[protein] + A + AMP + diphosphate + H(+). In terms of biological role, catalyzes the 2-thiolation of uridine at the wobble position (U34) of tRNA, leading to the formation of s(2)U34. The polypeptide is tRNA-specific 2-thiouridylase MnmA (Frankia alni (strain DSM 45986 / CECT 9034 / ACN14a)).